The following is a 355-amino-acid chain: GTPase Obg (355 aa).

The Obg domain maps to 1-159 (MKFLDEAKVY…KTIWLRLKLI (159 aa)). The 168-residue stretch at 160–327 (ADAGLVGLPN…ALRALRDIIV (168 aa)) folds into the OBG-type G domain. Residues 166 to 173 (GLPNAGKS), 191 to 195 (FTTLH), 212 to 215 (DIPG), 279 to 282 (SQID), and 308 to 310 (SAA) each bind GTP. Mg(2+) contacts are provided by S173 and T193. The tract at residues 333 to 355 (GDTALPDRSMPHESEVEEEDDRL) is disordered.

The protein belongs to the TRAFAC class OBG-HflX-like GTPase superfamily. OBG GTPase family. In terms of assembly, monomer. It depends on Mg(2+) as a cofactor.

Its subcellular location is the cytoplasm. An essential GTPase which binds GTP, GDP and possibly (p)ppGpp with moderate affinity, with high nucleotide exchange rates and a fairly low GTP hydrolysis rate. Plays a role in control of the cell cycle, stress response, ribosome biogenesis and in those bacteria that undergo differentiation, in morphogenesis control. The sequence is that of GTPase Obg from Agrobacterium fabrum (strain C58 / ATCC 33970) (Agrobacterium tumefaciens (strain C58)).